We begin with the raw amino-acid sequence, 307 residues long: MRKIILCSPRGFCAGVIRAIQTVEVALEKWGRPIYVKHEIVHNRHVVDKLREKGAIFIEDLQEVPRNSRVIFSAHGVPPSLREEATERGLIAIDATCGLVTKVHSAVKMYAKKGYHIILIGKRKHVEIIGIRGEAPDQITVVENIAEVEALPFSAQDPLFYVTQTTLSMDDAADIVAALKARYPQIFTLPSSSICYATQNRQGALRNILPQVDFVYVIGDRQSSNSNRLREVAERRGVTARLVNHPDEVTEEILQYSGNIGITAGASTPEDVVQACLMKLQELIPDLSIEMDLFVEEDTVFQLPKEL.

C13 lines the [4Fe-4S] cluster pocket. (2E)-4-hydroxy-3-methylbut-2-enyl diphosphate is bound by residues H42 and H75. Positions 42 and 75 each coordinate dimethylallyl diphosphate. Residues H42 and H75 each contribute to the isopentenyl diphosphate site. Position 97 (C97) interacts with [4Fe-4S] cluster. H125 provides a ligand contact to (2E)-4-hydroxy-3-methylbut-2-enyl diphosphate. H125 contacts dimethylallyl diphosphate. H125 contacts isopentenyl diphosphate. E127 acts as the Proton donor in catalysis. T165 is a (2E)-4-hydroxy-3-methylbut-2-enyl diphosphate binding site. A [4Fe-4S] cluster-binding site is contributed by C195. S223, S224, N225, and S267 together coordinate (2E)-4-hydroxy-3-methylbut-2-enyl diphosphate. S223, S224, N225, and S267 together coordinate dimethylallyl diphosphate. S223, S224, N225, and S267 together coordinate isopentenyl diphosphate.

Belongs to the IspH family. Requires [4Fe-4S] cluster as cofactor.

The enzyme catalyses isopentenyl diphosphate + 2 oxidized [2Fe-2S]-[ferredoxin] + H2O = (2E)-4-hydroxy-3-methylbut-2-enyl diphosphate + 2 reduced [2Fe-2S]-[ferredoxin] + 2 H(+). It catalyses the reaction dimethylallyl diphosphate + 2 oxidized [2Fe-2S]-[ferredoxin] + H2O = (2E)-4-hydroxy-3-methylbut-2-enyl diphosphate + 2 reduced [2Fe-2S]-[ferredoxin] + 2 H(+). Its pathway is isoprenoid biosynthesis; dimethylallyl diphosphate biosynthesis; dimethylallyl diphosphate from (2E)-4-hydroxy-3-methylbutenyl diphosphate: step 1/1. It functions in the pathway isoprenoid biosynthesis; isopentenyl diphosphate biosynthesis via DXP pathway; isopentenyl diphosphate from 1-deoxy-D-xylulose 5-phosphate: step 6/6. Functionally, catalyzes the conversion of 1-hydroxy-2-methyl-2-(E)-butenyl 4-diphosphate (HMBPP) into a mixture of isopentenyl diphosphate (IPP) and dimethylallyl diphosphate (DMAPP). Acts in the terminal step of the DOXP/MEP pathway for isoprenoid precursor biosynthesis. The polypeptide is 4-hydroxy-3-methylbut-2-enyl diphosphate reductase (Chlamydia trachomatis serovar L2b (strain UCH-1/proctitis)).